We begin with the raw amino-acid sequence, 902 residues long: Glutamate receptor 4 (902 aa).

The first 20 residues, 1-20, serve as a signal peptide directing secretion; the sequence is MRIISRQIVLLFSGFWGLAM. The Extracellular segment spans residues 22-544; it reads AFPSSVQIGG…GVFSFLDPLA (523 aa). Residues N52, N56, N258, N371, N407, and N414 are each glycosylated (N-linked (GlcNAc...) asparagine). Residues C84 and C331 are joined by a disulfide bond. L-glutamate-binding residues include P500, T502, and R507. A helical transmembrane segment spans residues 545–565; sequence YEIWMCIVFAYIGVSVVLFLV. Residues 566–592 lie on the Cytoplasmic side of the membrane; that stretch reads SRFSPYEWHTEEPEDGKEGPSDQPPNE. Positions 593-608 form an intramembrane region, helical; Pore-forming; sequence FGIFNSLWFSLGAFMQ. The stretch at 609-611 is an intramembrane region; that stretch reads QGC. C611 is lipidated: S-palmitoyl cysteine. Over 612–617 the chain is Cytoplasmic; that stretch reads DISPRS. The chain crosses the membrane as a helical span at residues 618-638; sequence LSGRIVGGVWWFFTLIIISSY. Residues 639 to 813 lie on the Extracellular side of the membrane; that stretch reads TANLAAFLTV…DKTSALSLSN (175 aa). S676, T677, and E727 together coordinate L-glutamate. An intrachain disulfide couples C740 to C795. The chain crosses the membrane as a helical span at residues 814–834; that stretch reads VAGVFYILVGGLGLAMLVALI. At 835-902 the chain is on the cytoplasmic side; the sequence is EFCYKSRAEA…GLAVIASDLP (68 aa). C837 is lipidated: S-palmitoyl cysteine. S862 carries the phosphoserine; by PKC/PRKCG modification.

Belongs to the glutamate-gated ion channel (TC 1.A.10.1) family. GRIA4 subfamily. As to quaternary structure, homotetramer or heterotetramer of pore-forming glutamate receptor subunits. Tetramers may be formed by the dimerization of dimers. Interacts with EPB41L1 via its C-terminus. Isoform 3 interacts with PICK1. Found in a complex with GRIA1, GRIA2, GRIA3, CNIH2, CNIH3, CACNG2, CACNG3, CACNG4, CACNG5, CACNG7 and CACNG8. Interacts with CACNG5 and PRKCG. Found in a complex with GRIA1, GRIA2, GRIA3, DLG4, CACNG8 and CNIH2. In terms of processing, palmitoylated. Depalmitoylated upon L-glutamate stimulation. ZDHHC3/GODZ specifically palmitoylates Cys-611, which leads to Golgi retention and decreased cell surface expression. In contrast, Cys-837 palmitoylation does not affect cell surface expression but regulates stimulation-dependent endocytosis. Phosphorylated at Ser-862 by PRKCG; phosphorylation increases plasma membrane-associated GRI4 expression.

The protein resides in the cell membrane. It localises to the postsynaptic cell membrane. The protein localises to the cell projection. Its subcellular location is the dendrite. The enzyme catalyses Ca(2+)(in) = Ca(2+)(out). It carries out the reaction Na(+)(in) = Na(+)(out). The catalysed reaction is Mg(2+)(in) = Mg(2+)(out). Ionotropic glutamate receptor that functions as a ligand-gated cation channel, gated by L-glutamate and glutamatergic agonists such as alpha-amino-3-hydroxy-5-methyl-4-isoxazolepropionic acid (AMPA), quisqualic acid, and kainic acid. L-glutamate acts as an excitatory neurotransmitter at many synapses in the central nervous system and plays an important role in fast excitatory synaptic transmission. Binding of the excitatory neurotransmitter L-glutamate induces a conformation change, leading to the opening of the cation channel, and thereby converts the chemical signal to an electrical impulse upon entry of monovalent and divalent cations such as sodium and calcium. The receptor then desensitizes rapidly and enters a transient inactive state, characterized by the presence of bound agonist. In the presence of CACNG8, shows resensitization which is characterized by a delayed accumulation of current flux upon continued application of L-glutamate. This is Glutamate receptor 4 from Macaca fascicularis (Crab-eating macaque).